The following is a 572-amino-acid chain: Proline--tRNA ligase (572 aa).

This sequence belongs to the class-II aminoacyl-tRNA synthetase family. ProS type 1 subfamily. Homodimer.

The protein localises to the cytoplasm. It catalyses the reaction tRNA(Pro) + L-proline + ATP = L-prolyl-tRNA(Pro) + AMP + diphosphate. Catalyzes the attachment of proline to tRNA(Pro) in a two-step reaction: proline is first activated by ATP to form Pro-AMP and then transferred to the acceptor end of tRNA(Pro). As ProRS can inadvertently accommodate and process non-cognate amino acids such as alanine and cysteine, to avoid such errors it has two additional distinct editing activities against alanine. One activity is designated as 'pretransfer' editing and involves the tRNA(Pro)-independent hydrolysis of activated Ala-AMP. The other activity is designated 'posttransfer' editing and involves deacylation of mischarged Ala-tRNA(Pro). The misacylated Cys-tRNA(Pro) is not edited by ProRS. This chain is Proline--tRNA ligase, found in Enterococcus faecalis (strain ATCC 700802 / V583).